The sequence spans 616 residues: Sulfite reductase [NADPH] hemoprotein beta-component (616 aa).

A compositionally biased stretch (basic and acidic residues) spans 1–10 (MDDHSPRDAA). The disordered stretch occupies residues 1–35 (MDDHSPRDAAETPAPGPAATPAKRVYETPPTSRPI). Residues 11–22 (ETPAPGPAATPA) are compositionally biased toward low complexity. Cysteine 470, cysteine 476, cysteine 515, and cysteine 519 together coordinate [4Fe-4S] cluster. Residue cysteine 519 participates in siroheme binding.

It belongs to the nitrite and sulfite reductase 4Fe-4S domain family. As to quaternary structure, alpha(8)-beta(8). The alpha component is a flavoprotein, the beta component is a hemoprotein. It depends on siroheme as a cofactor. The cofactor is [4Fe-4S] cluster.

It catalyses the reaction hydrogen sulfide + 3 NADP(+) + 3 H2O = sulfite + 3 NADPH + 4 H(+). The protein operates within sulfur metabolism; hydrogen sulfide biosynthesis; hydrogen sulfide from sulfite (NADPH route): step 1/1. Functionally, component of the sulfite reductase complex that catalyzes the 6-electron reduction of sulfite to sulfide. This is one of several activities required for the biosynthesis of L-cysteine from sulfate. This is Sulfite reductase [NADPH] hemoprotein beta-component from Methylobacterium radiotolerans (strain ATCC 27329 / DSM 1819 / JCM 2831 / NBRC 15690 / NCIMB 10815 / 0-1).